The primary structure comprises 267 residues: MRFLCLHGYAFSVEVLQQQMEPITAHLPSDWEYEFLEAGMEPTQLMLPNLKQVPKPNSSWYNFPYPEDVEEAYERLAAYVESEGPFDGIWGFSQGGSMAALLLLMHQAEHPDTPYPFKMAIFTSAFLPHSFDNGVISWDLTEKNTLEPAYLPGRIDVSHGKKLDWKKDLHTSIEYDMINAVKDELDFPVDLLLRWRPSDIPEKIPVPSVHVRGLKDHYSFVDESVYELFDPDMARKMTHRGGHNFPRYNEELVHFAELIIETVVSLH.

Active-site charge relay system residues include S93, D183, and H243.

This sequence belongs to the AB hydrolase 3 family.

It functions in the pathway mycotoxin biosynthesis. Hydrolase; part of the gene cluster that mediates the biosynthesis of fusaric acid, a mycotoxin with low to moderate toxicity to animals and humans, but with high phytotoxic properties. L-aspartate is suggested as fusaric acid amino acid precursor that is activated and further processed to O-acetyl-L-homoserine by cluster enzymes aspartate kinase FUB3 and homoserine O-acetyltransferase FUB5, as well as enzymes of the primary metabolism. The polyketide synthase (PKS) FUB1 generates the triketide trans-2-hexenal which is presumptively released by the hydrolase FUB4 and linked to the NRPS-bound amino acid precursor by NAD(P)-dependent dehydrogenase FUB6. FUB1, FUB4, and the non-canonical NRPS Fub8 may form an enzyme complex. Further processing of the NRPS-bound intermediate might be carried out by FUB6 and the sulfhydrylase FUB7, enabling a spontaneous electrocyclization to close the carbon backbone of fusaric acid. Dihydrofusaric acid is likely to be released via reduction by the thioester reductase (TR) domain of FUB8 whereupon the final oxidation to fusaric acid may (also) be performed by the FMN-dependent dehydrogenase FUB9. This Gibberella moniliformis (strain M3125 / FGSC 7600) (Maize ear and stalk rot fungus) protein is Hydrolase FUB4.